Consider the following 368-residue polypeptide: Flagellar P-ring protein (368 aa).

Residues Met-1 to Ala-22 form the signal peptide.

Belongs to the FlgI family. As to quaternary structure, the basal body constitutes a major portion of the flagellar organelle and consists of four rings (L,P,S, and M) mounted on a central rod.

It localises to the periplasm. The protein resides in the bacterial flagellum basal body. Its function is as follows. Assembles around the rod to form the L-ring and probably protects the motor/basal body from shearing forces during rotation. The chain is Flagellar P-ring protein from Bordetella pertussis (strain Tohama I / ATCC BAA-589 / NCTC 13251).